The primary structure comprises 243 residues: UPF0246 protein Spy49_1742 (243 aa).

The protein belongs to the UPF0246 family.

This is UPF0246 protein Spy49_1742 from Streptococcus pyogenes serotype M49 (strain NZ131).